We begin with the raw amino-acid sequence, 156 residues long: Lipoprotein signal peptidase (156 aa).

A run of 2 helical transmembrane segments spans residues 57 to 77 (LFLISITMVAILLMMFYLFIN) and 83 to 103 (ILKISLSLIISGAIGNLIDRI). Residues Asp-110 and Asp-129 contribute to the active site. Residues 124 to 144 (IFNIADVLVSLGTILLIIFII) form a helical membrane-spanning segment.

It belongs to the peptidase A8 family.

It is found in the cell membrane. The enzyme catalyses Release of signal peptides from bacterial membrane prolipoproteins. Hydrolyzes -Xaa-Yaa-Zaa-|-(S,diacylglyceryl)Cys-, in which Xaa is hydrophobic (preferably Leu), and Yaa (Ala or Ser) and Zaa (Gly or Ala) have small, neutral side chains.. It participates in protein modification; lipoprotein biosynthesis (signal peptide cleavage). In terms of biological role, this protein specifically catalyzes the removal of signal peptides from prolipoproteins. The polypeptide is Lipoprotein signal peptidase (Clostridium tetani (strain Massachusetts / E88)).